A 268-amino-acid polypeptide reads, in one-letter code: Syntaxin-22 (268 aa).

The disordered stretch occupies residues 1-23 (MSFQDLESGRGRSTRKFNGGRQD). Ser2 carries the N-acetylserine modification. Residues 2 to 246 (SFQDLESGRG…AAKTQKSNSS (245 aa)) lie on the Cytoplasmic side of the membrane. The t-SNARE coiled-coil homology domain occupies 175-237 (EAVIEEREQG…SQGKSQLVQA (63 aa)). The chain crosses the membrane as a helical; Anchor for type IV membrane protein span at residues 247–267 (LTCLLLVIFGIVLLIVIIVLA). Residue Ala268 is a topological domain, vesicular.

The protein belongs to the syntaxin family. As to quaternary structure, interacts with VTI11 and SYP51 to form a t-SNARE complex, but not with VPS45. Expressed in roots, leaves, stems, flower and green siliques.

It localises to the prevacuolar compartment membrane. It is found in the vacuole membrane. Functionally, may provide the t-SNARE function in the vacuolar assembly. Promotes the formation of vacuolar membrane 'bulbs'. Required for inflorescence stem gravitropism. The polypeptide is Syntaxin-22 (SYP22) (Arabidopsis thaliana (Mouse-ear cress)).